The primary structure comprises 354 residues: Guanine nucleotide-binding protein alpha-3 subunit (354 aa).

A lipid anchor (N-myristoyl glycine) is attached at Gly2. Cys4 carries S-palmitoyl cysteine lipidation. The 323-residue stretch at 32–354 (KVVKLLLLGA…QANLQGCGLY (323 aa)) folds into the G-alpha domain. Positions 35-48 (KLLLLGAGECGKST) are G1 motif. Residues 40 to 47 (GAGECGKS), 176 to 182 (LLSRIKT), 201 to 205 (DVGGQ), 270 to 273 (NKKD), and Ala326 contribute to the GTP site. Residues Ser47 and Thr182 each contribute to the Mg(2+) site. A G2 motif region spans residues 174–182 (DILLSRIKT). The G3 motif stretch occupies residues 197-206 (FRVFDVGGQR). The tract at residues 266–273 (ILFLNKKD) is G4 motif. The tract at residues 324 to 329 (TCATDT) is G5 motif.

Belongs to the G-alpha family. G(q) subfamily. G proteins are composed of 3 units; alpha, beta and gamma. The alpha chain contains the guanine nucleotide binding site.

In terms of biological role, guanine nucleotide-binding proteins (G proteins) are involved as modulators or transducers in various transmembrane signaling systems. Promotes transcription of 3',5'-cyclic phosphodiesterases pde-1 and pde-5, leading to reduced cGMP levels in sensory neurons. This causes suppression of insulin production and signaling which leads to increased daf-16 activity and contributes to increased adult lifespan and resistance to oxidative stress. In addition, by reducing cGMP levels, inhibits TGF-beta signaling pathways. Involved in behavioral response to P.aeruginosa by controlling the expression of daf-7, a member of the TGF-beta family, in ASJ sensory neurons. The sequence is that of Guanine nucleotide-binding protein alpha-3 subunit (gpa-3) from Caenorhabditis briggsae.